A 284-amino-acid polypeptide reads, in one-letter code: uncharacterized protein (284 aa).

Positions 1-20 are cleaved as a signal peptide; it reads MLHNIQSILQFLLFVSSVQA. An Apple domain is found at 38–121; sequence CFEFKKNYWI…FTVNFFRNIC (84 aa). 3 disulfides stabilise this stretch: cysteine 38/cysteine 121, cysteine 63/cysteine 89, and cysteine 67/cysteine 77. Asparagine 256 carries N-linked (GlcNAc...) asparagine glycosylation. The helical transmembrane segment at 264-284 threads the bilayer; it reads SSTGLKFTTGLLIILVVFLFL.

Its subcellular location is the membrane. This is an uncharacterized protein from Caenorhabditis elegans.